We begin with the raw amino-acid sequence, 411 residues long: POU domain, class 4, transcription factor 2 (411 aa).

The disordered stretch occupies residues 29–95; that stretch reads LHSASPGSSA…SEAMRRACLP (67 aa). The span at 31–52 shows a compositional bias: low complexity; the sequence is SASPGSSAPAAPSASSPSSSSN. Composition is skewed to gly residues over residues 53–68 and 76–86; these read AGGG…GGGR and GSGGSGGGGGS. The tract at residues 93–239 is required for transcriptional activation; the sequence is CLPTPPSNIF…MHQAALSMAH (147 aa). Residues 112 to 121 carry the POU-IV box motif; sequence RAEALAAVDI. The segment covering 154–168 has biased composition (low complexity); the sequence is SAASSSSVPISHPSA. The disordered stretch occupies residues 154–190; the sequence is SAASSSSVPISHPSALAGTHHHHHHHHHHHHQPHQAL. Residues 172-186 show a composition bias toward basic residues; the sequence is THHHHHHHHHHHHQP. Residues 173–187 carry the Nuclear speckle targeting signal motif; that stretch reads HHHHHHHHHHHHQPH. The interval 240–411 is required for DNA-binding and transcriptional repression; the sequence is AHGLPSHMGC…QKRMKYSAGI (172 aa). The region spanning 252–329 is the POU-specific domain; that stretch reads DVDADPRDLE…ILQAWLEEAE (78 aa). Residues 347 to 406 constitute a DNA-binding region (homeobox); it reads KKRKRTSIAAPEKRSLEAYFAIQPRPSSEKIAAIAEKLDLKKNVVRVWFCNQRQKQKRMK.

The protein belongs to the POU transcription factor family. Class-4 subfamily. As to quaternary structure, isoform 2: Interacts with POU4F1 isoform 1; this interaction inhibits both POU4F1 DNA-binding and transcriptional activities. Isoform 2: Interacts (C-terminus) with ESR1 (via DNA-binding domain); this interaction increases the estrogen receptor ESR1 transcriptional activity in a DNA- and ligand 17-beta-estradiol-independent manner. Isoform 2: Interacts (via C-terminus) with TP53 (via N-terminus). Interacts with DLX1 (via homeobox DNA-binding domain); this interaction suppresses DLX1-mediated transcriptional activity in postnatal retina enhancing retinal ganglion cell (RGC) differentiation. Interacts with DLX2 (via homeobox DNA-binding domain); this interaction enhances RGC differentiation. Isoform 1: Interacts (via C-terminus) with ISL1 (via C-terminus). Isoform 1: Interacts with ISL2. Isoform 1: Interacts with LHX2. As to expression, expressed in retinal ganglion cells (RGCs). Expressed in mature osteoclasts. Expressed in cells of layers of the superior colliculus and the adjacent periaqueductal gray (at protein level). Expressed in the brain, peripheral sensory nervous system and retina. Expressed in the optical, intermediate, and deep gray areas of the superior colliculus, the dorsal column of the mesencephalic and pontine central gray, and the lateral interpeduncular nucleus of the brain. Expressed predominantly in postmitotic, terminally differentiated neurons. Expressed in ganglion cell layer (GCL) of the retina.

It is found in the nucleus. The protein resides in the nucleus speckle. The protein localises to the cytoplasm. Tissue-specific DNA-binding transcription factor involved in the development and differentiation of target cells. Functions either as activator or repressor by modulating the rate of target gene transcription through RNA polymerase II enzyme in a promoter-dependent manner. Binds to the consensus octamer motif 5'-AT[A/T]A[T/A]T[A/T]A-3' of promoter of target genes. Plays a fundamental role in the gene regulatory network essential for retinal ganglion cell (RGC) differentiation. Binds to an octamer site to form a ternary complex with ISL1; cooperates positively with ISL1 and ISL2 to potentiate transcriptional activation of RGC target genes being involved in RGC fate commitment in the developing retina and RGC axon formation and pathfinding. Inhibits DLX1 and DLX2 transcriptional activities preventing DLX1- and DLX2-mediated ability to promote amacrine cell fate specification. In cooperation with TP53 potentiates transcriptional activation of BAX promoter activity increasing neuronal cell apoptosis. Negatively regulates BAX promoter activity in the absence of TP53. Acts as a transcriptional coactivator via its interaction with the transcription factor ESR1 by enhancing its effect on estrogen response element (ERE)-containing promoter. Antagonizes the transcriptional stimulatory activity of POU4F1 by preventing its binding to an octamer motif. Involved in TNFSF11-mediated terminal osteoclast differentiation. The sequence is that of POU domain, class 4, transcription factor 2 from Mus musculus (Mouse).